Here is a 363-residue protein sequence, read N- to C-terminus: Protein U2 (363 aa).

A signal peptide spans 1–18; the sequence is MFCRSPFLGISSWSLASA.

The chain is Protein U2 (U2) from Homo sapiens (Human).